Reading from the N-terminus, the 290-residue chain is UBX domain-containing protein 1-B (290 aa).

One can recognise a UBA domain in the interval 1–42 (MADCSALESLIEMGFSPSRAEKALSATGNQGIEPAMDWLVEH). Positions 49-210 (KEPSVVIPED…VQEPPTKKEY (162 aa)) are disordered. 2 stretches are compositionally biased toward basic and acidic residues: residues 80 to 117 (PLTEEEKEKQTKRMMELIAQKQKEREEREKRERIEQEK) and 132 to 172 (RMQE…DRAR). Residues 81 to 171 (LTEEEKEKQT…KIARDKADRA (91 aa)) are a coiled coil. The span at 185–201 (PAETSVPATAPSPSSPV) shows a compositional bias: low complexity. Positions 208–287 (KEYDQCRIQV…GLVPTAVLIV (80 aa)) constitute a UBX domain.

It localises to the cytoplasm. In terms of biological role, component of a complex required to couple deglycosylation and proteasome-mediated degradation of misfolded proteins in the endoplasmic reticulum that are retrotranslocated in the cytosol. Involved in ubiquitin-proteasome systems. The protein is UBX domain-containing protein 1-B (ubxn1-b) of Xenopus laevis (African clawed frog).